The primary structure comprises 187 residues: Dirigent protein 23 (187 aa).

Residues 1-24 form the signal peptide; it reads MAKEEYVSRMLVMLIMIMPLVAQG. Residue Asn182 is glycosylated (N-linked (GlcNAc...) asparagine).

It belongs to the plant dirigent protein family. As to quaternary structure, homodimer.

Its subcellular location is the secreted. The protein resides in the extracellular space. It localises to the apoplast. Functionally, dirigent proteins impart stereoselectivity on the phenoxy radical-coupling reaction, yielding optically active lignans from two molecules of coniferyl alcohol in the biosynthesis of lignans, flavonolignans, and alkaloids and thus plays a central role in plant secondary metabolism. The sequence is that of Dirigent protein 23 (DIR23) from Arabidopsis thaliana (Mouse-ear cress).